Here is an 82-residue protein sequence, read N- to C-terminus: Large ribosomal subunit protein uL23 (82 aa).

Belongs to the universal ribosomal protein uL23 family. As to quaternary structure, part of the 50S ribosomal subunit. Contacts protein L29.

Functionally, binds to 23S rRNA. One of the proteins that surrounds the polypeptide exit tunnel on the outside of the ribosome. In Methanococcoides burtonii (strain DSM 6242 / NBRC 107633 / OCM 468 / ACE-M), this protein is Large ribosomal subunit protein uL23.